The sequence spans 393 residues: Endoplasmic reticulum junction formation protein lunapark-A (393 aa).

Over 1–45 the chain is Cytoplasmic; it reads MGAVVSRWRAKPSTVEVLEGLDKDIQVLEEYREKNHKQLKLWVYR. The chain crosses the membrane as a helical span at residues 46–66; sequence LLLYSALLYLMACAVVYAWYI. Residues 67-69 lie on the Lumenal side of the membrane; the sequence is PER. Residues 70-90 traverse the membrane as a helical segment; the sequence is MIGKLIVASPFLLFPLLIWLL. The Cytoplasmic segment spans residues 91–393; it reads RKLLIILYNK…EQDVSAMEVE (303 aa). The stretch at 95–130 forms a coiled coil; sequence IILYNKRTERNNEKLEELKAEKKKILEQVMETETYK. The interval 146 to 209 is disordered; it reads KLELETQPIG…PPEKGLSAST (64 aa). Residues 176–190 show a composition bias toward pro residues; that stretch reads TGRPPPVPVPGPSVP. Residues 269-294 form a C4-type; plays a role in ER morphology zinc finger; that stretch reads CQQCLSHNGMALKEEFEYIAFRCAYC. Positions 314–393 are disordered; it reads AAEAKTSQDP…EQDVSAMEVE (80 aa). 2 stretches are compositionally biased toward basic and acidic residues: residues 340–353 and 364–383; these read ESKE…KAGD and EEMK…KSDG.

This sequence belongs to the lunapark family. In terms of assembly, homodimer; homodimerization requires the C4-type zinc finger motif and decreases during mitosis in a phosphorylation-dependent manner. In terms of processing, phosphorylated. Phosphorylation occurs during interphase. Phosphorylation also occurs during mitosis; these phosphorylations reduce both its homodimerization and the ER three-way tubular junction formation.

The protein resides in the endoplasmic reticulum membrane. Endoplasmic reticulum (ER)-shaping membrane protein that plays a role in determining ER morphology. Involved in the stabilization of nascent three-way ER tubular junctions within the ER network. May also play a role as a curvature-stabilizing protein within three-way ER tubular junction network. This Danio rerio (Zebrafish) protein is Endoplasmic reticulum junction formation protein lunapark-A (lnpka).